The following is a 126-amino-acid chain: uncharacterized protein (126 aa).

The helical transmembrane segment at 55 to 77 (MLLINSNLVLSGLLLFIDVYRAA) threads the bilayer.

It is found in the membrane. This is an uncharacterized protein from Dictyostelium discoideum (Social amoeba).